Here is a 423-residue protein sequence, read N- to C-terminus: Gamma-glutamyl phosphate reductase (423 aa).

Belongs to the gamma-glutamyl phosphate reductase family.

It is found in the cytoplasm. The enzyme catalyses L-glutamate 5-semialdehyde + phosphate + NADP(+) = L-glutamyl 5-phosphate + NADPH + H(+). The protein operates within amino-acid biosynthesis; L-proline biosynthesis; L-glutamate 5-semialdehyde from L-glutamate: step 2/2. Catalyzes the NADPH-dependent reduction of L-glutamate 5-phosphate into L-glutamate 5-semialdehyde and phosphate. The product spontaneously undergoes cyclization to form 1-pyrroline-5-carboxylate. This is Gamma-glutamyl phosphate reductase from Magnetococcus marinus (strain ATCC BAA-1437 / JCM 17883 / MC-1).